The chain runs to 489 residues: Glycogen synthase (489 aa).

ADP-alpha-D-glucose is bound at residue K17.

Belongs to the glycosyltransferase 1 family. Bacterial/plant glycogen synthase subfamily.

The enzyme catalyses [(1-&gt;4)-alpha-D-glucosyl](n) + ADP-alpha-D-glucose = [(1-&gt;4)-alpha-D-glucosyl](n+1) + ADP + H(+). The protein operates within glycan biosynthesis; glycogen biosynthesis. In terms of biological role, synthesizes alpha-1,4-glucan chains using ADP-glucose. This chain is Glycogen synthase, found in Nitratidesulfovibrio vulgaris (strain ATCC 29579 / DSM 644 / CCUG 34227 / NCIMB 8303 / VKM B-1760 / Hildenborough) (Desulfovibrio vulgaris).